Here is a 248-residue protein sequence, read N- to C-terminus: ATP synthase subunit a (248 aa).

The next 6 helical transmembrane spans lie at 27 to 47 (FTNS…LMLV), 83 to 103 (FFPL…IGIV), 113 to 133 (LIVT…YGFS), 142 to 162 (LFVP…IEVI), 192 to 212 (FVAM…LPLG), and 215 to 235 (IALT…FAIL).

Belongs to the ATPase A chain family. As to quaternary structure, F-type ATPases have 2 components, CF(1) - the catalytic core - and CF(0) - the membrane proton channel. CF(1) has five subunits: alpha(3), beta(3), gamma(1), delta(1), epsilon(1). CF(0) has four main subunits: a, b, b' and c.

It is found in the cell inner membrane. In terms of biological role, key component of the proton channel; it plays a direct role in the translocation of protons across the membrane. This chain is ATP synthase subunit a, found in Rhodopseudomonas palustris (strain ATCC BAA-98 / CGA009).